The primary structure comprises 61 residues: uncharacterized protein (61 aa).

This is an uncharacterized protein from Saccharomyces cerevisiae (strain ATCC 204508 / S288c) (Baker's yeast).